A 547-amino-acid polypeptide reads, in one-letter code: Chaperonin GroEL (547 aa).

Residues 30–33, lysine 51, 87–91, glycine 415, 479–481, and aspartate 495 each bind ATP; these read TLGP, DGTTT, and NAA.

This sequence belongs to the chaperonin (HSP60) family. As to quaternary structure, forms a cylinder of 14 subunits composed of two heptameric rings stacked back-to-back. Interacts with the co-chaperonin GroES.

It is found in the cytoplasm. The enzyme catalyses ATP + H2O + a folded polypeptide = ADP + phosphate + an unfolded polypeptide.. Its function is as follows. Together with its co-chaperonin GroES, plays an essential role in assisting protein folding. The GroEL-GroES system forms a nano-cage that allows encapsulation of the non-native substrate proteins and provides a physical environment optimized to promote and accelerate protein folding. In Marinomonas sp. (strain MWYL1), this protein is Chaperonin GroEL.